The primary structure comprises 163 residues: ATP synthase subunit b 1 (163 aa).

A helical transmembrane segment spans residues 6–26 (LAELWVAVAFLLFVGILIYVG).

The protein belongs to the ATPase B chain family. As to quaternary structure, F-type ATPases have 2 components, F(1) - the catalytic core - and F(0) - the membrane proton channel. F(1) has five subunits: alpha(3), beta(3), gamma(1), delta(1), epsilon(1). F(0) has three main subunits: a(1), b(2) and c(10-14). The alpha and beta chains form an alternating ring which encloses part of the gamma chain. F(1) is attached to F(0) by a central stalk formed by the gamma and epsilon chains, while a peripheral stalk is formed by the delta and b chains.

The protein resides in the cell inner membrane. Functionally, f(1)F(0) ATP synthase produces ATP from ADP in the presence of a proton or sodium gradient. F-type ATPases consist of two structural domains, F(1) containing the extramembraneous catalytic core and F(0) containing the membrane proton channel, linked together by a central stalk and a peripheral stalk. During catalysis, ATP synthesis in the catalytic domain of F(1) is coupled via a rotary mechanism of the central stalk subunits to proton translocation. Its function is as follows. Component of the F(0) channel, it forms part of the peripheral stalk, linking F(1) to F(0). This chain is ATP synthase subunit b 1, found in Xanthobacter autotrophicus (strain ATCC BAA-1158 / Py2).